The chain runs to 483 residues: Glycogen synthase (483 aa).

Lys-18 lines the ADP-alpha-D-glucose pocket.

It belongs to the glycosyltransferase 1 family. Bacterial/plant glycogen synthase subfamily.

It carries out the reaction [(1-&gt;4)-alpha-D-glucosyl](n) + ADP-alpha-D-glucose = [(1-&gt;4)-alpha-D-glucosyl](n+1) + ADP + H(+). Its pathway is glycan biosynthesis; glycogen biosynthesis. Synthesizes alpha-1,4-glucan chains using ADP-glucose. This Methylocella silvestris (strain DSM 15510 / CIP 108128 / LMG 27833 / NCIMB 13906 / BL2) protein is Glycogen synthase.